An 840-amino-acid chain; its full sequence is Radial spoke head 10 homolog B (840 aa).

Composition is skewed to basic and acidic residues over residues 1-16 and 51-63; these read MVKE…DKSA and QPKD…EVKS. Residues 1 to 74 are disordered; it reads MVKEKKKADK…SLPNEDTTQY (74 aa). MORN repeat units lie at residues 86–108, 109–131, 132–154, 155–177, 179–201, 204–226, 227–249, 251–273, 284–306, and 307–329; these read SYEG…QGGC, TYQG…ADGL, KYEG…PDGS, TYEG…STQP, SYIG…NQEG, WYEG…KSGN, IYEG…LTTN, EYTG…FLKR, EYVG…ASGA, and MYEG…KNGR. The stretch at 758–801 forms a coiled coil; the sequence is KEKVKENRLHNEAMALQRKMENEELEARLNSLREEEAKRQDYEV. Residues 810 to 840 form a disordered region; that stretch reads VDAPSSSFTPSPPKEDTVVSSKSITSKKKKK.

As to quaternary structure, interacts with RSPH6A. Does not appear to be part of the axonemal radial spoke complexes 1 or 2.

The protein resides in the cytoplasm. It is found in the cytoskeleton. It localises to the cilium axoneme. Its subcellular location is the cell projection. The protein localises to the cilium. The protein resides in the flagellum. Its function is as follows. May function as part of the axonemal radial spoke complex 3 (RS3). Radial spoke complexes are important for ciliary motility. The sequence is that of Radial spoke head 10 homolog B (RSPH10B) from Bos taurus (Bovine).